Here is a 1066-residue protein sequence, read N- to C-terminus: Thyrotropin-releasing hormone-degrading ectoenzyme (1066 aa).

Residues methionine 1–lysine 14 are compositionally biased toward basic and acidic residues. The tract at residues methionine 1 to glycine 43 is disordered. Topologically, residues methionine 1–leucine 81 are cytoplasmic. Basic residues predominate over residues lysine 15–lysine 25. Threonine 71 carries the post-translational modification Phosphothreonine; by PKC. The helical; Signal-anchor for type II membrane protein transmembrane segment at valine 82 to leucine 102 threads the bilayer. Residues serine 103–histidine 1066 lie on the Extracellular side of the membrane. Residues glycine 117–proline 177 are disordered. A compositionally biased stretch (gly residues) spans threonine 118–glutamate 127. N-linked (GlcNAc...) asparagine glycosylation occurs at asparagine 131. Residues histidine 143–glycine 154 are compositionally biased toward basic and acidic residues. Residues asparagine 202, asparagine 217, asparagine 264, and asparagine 380 are each glycosylated (N-linked (GlcNAc...) asparagine). Residue alanine 446–asparagine 450 coordinates substrate. Zn(2+) is bound at residue histidine 482. Residue glutamate 483 is the Proton acceptor of the active site. Residues histidine 486 and glutamate 505 each contribute to the Zn(2+) site. N-linked (GlcNAc...) asparagine glycosylation is found at asparagine 647, asparagine 676, asparagine 691, asparagine 705, asparagine 726, asparagine 842, and asparagine 948.

It belongs to the peptidase M1 family. Homodimer; disulfide-linked. The cofactor is Zn(2+). Predominantly expressed in brain and pituitary. Lower levels in lung and liver.

The protein localises to the membrane. It catalyses the reaction Release of the N-terminal pyroglutamyl group from pGlu-|-His-Xaa tripeptides and pGlu-|-His-Xaa-Gly tetrapeptides.. Its function is as follows. Specific inactivation of TRH after its release. This is Thyrotropin-releasing hormone-degrading ectoenzyme (Trhde) from Rattus norvegicus (Rat).